Consider the following 346-residue polypeptide: Low specificity L-threonine aldolase (346 aa).

N6-(pyridoxal phosphate)lysine is present on Lys207.

Belongs to the threonine aldolase family. Homotetramer. It depends on pyridoxal 5'-phosphate as a cofactor.

It carries out the reaction L-threonine = acetaldehyde + glycine. It catalyses the reaction L-allo-threonine = acetaldehyde + glycine. Catalyzes the cleavage of L-allo-threonine and L-threonine to glycine and acetaldehyde. Can also act on L-erythro-phenylserine, L-threo-phenylserine, L-beta-3,4-methylenedioxyphenylserine and L-beta-3,4-dihydroxyphenylserine. In Pseudomonas sp. (strain NCIMB 10558), this protein is Low specificity L-threonine aldolase (ltaE).